The chain runs to 132 residues: Small ribosomal subunit protein uS8 (132 aa).

It belongs to the universal ribosomal protein uS8 family. Part of the 30S ribosomal subunit. Contacts proteins S5 and S12.

One of the primary rRNA binding proteins, it binds directly to 16S rRNA central domain where it helps coordinate assembly of the platform of the 30S subunit. The chain is Small ribosomal subunit protein uS8 from Rhodopseudomonas palustris (strain BisA53).